We begin with the raw amino-acid sequence, 687 residues long: Polyphosphate kinase (687 aa).

ATP is bound at residue Asn-45. Residues Arg-375 and Arg-405 each contribute to the Mg(2+) site. His-435 acts as the Phosphohistidine intermediate in catalysis. ATP is bound by residues Tyr-472, Arg-568, and His-596.

This sequence belongs to the polyphosphate kinase 1 (PPK1) family. Requires Mg(2+) as cofactor. In terms of processing, an intermediate of this reaction is the autophosphorylated ppk in which a phosphate is covalently linked to a histidine residue through a N-P bond.

It catalyses the reaction [phosphate](n) + ATP = [phosphate](n+1) + ADP. Its function is as follows. Catalyzes the reversible transfer of the terminal phosphate of ATP to form a long-chain polyphosphate (polyP). This is Polyphosphate kinase from Burkholderia multivorans (strain ATCC 17616 / 249).